Here is a 93-residue protein sequence, read N- to C-terminus: Small hydrophobic protein (93 aa).

The next 2 membrane-spanning stretches (helical) occupy residues L5–Y25 and A32–P52.

It localises to the membrane. This is Small hydrophobic protein from Tupaia virus (isolate Tupaia/Thailand/-/1986) (TUPV).